Consider the following 1345-residue polypeptide: DNA-directed RNA polymerase subunit beta' (1345 aa).

Positions 60, 62, 75, and 78 each coordinate Zn(2+). The Mg(2+) site is built by aspartate 536, aspartate 538, and aspartate 540. The Zn(2+) site is built by cysteine 895, cysteine 974, cysteine 981, and cysteine 984. The segment at 1325–1345 (DDNDNPVDFGDEFRIDPDELK) is disordered. Positions 1335–1345 (DEFRIDPDELK) are enriched in basic and acidic residues.

This sequence belongs to the RNA polymerase beta' chain family. The RNAP catalytic core consists of 2 alpha, 1 beta, 1 beta' and 1 omega subunit. When a sigma factor is associated with the core the holoenzyme is formed, which can initiate transcription. The cofactor is Mg(2+). It depends on Zn(2+) as a cofactor.

It carries out the reaction RNA(n) + a ribonucleoside 5'-triphosphate = RNA(n+1) + diphosphate. Functionally, DNA-dependent RNA polymerase catalyzes the transcription of DNA into RNA using the four ribonucleoside triphosphates as substrates. This Bifidobacterium animalis subsp. lactis (strain AD011) protein is DNA-directed RNA polymerase subunit beta'.